A 270-amino-acid chain; its full sequence is Type III pantothenate kinase (270 aa).

6-13 (DAGNTNIV) lines the ATP pocket. 107 to 110 (GADR) contributes to the substrate binding site. The active-site Proton acceptor is Asp109. Residue Asp129 participates in K(+) binding. Position 132 (Thr132) interacts with ATP. Thr184 contributes to the substrate binding site.

This sequence belongs to the type III pantothenate kinase family. Homodimer. It depends on NH4(+) as a cofactor. The cofactor is K(+).

The protein localises to the cytoplasm. It catalyses the reaction (R)-pantothenate + ATP = (R)-4'-phosphopantothenate + ADP + H(+). The protein operates within cofactor biosynthesis; coenzyme A biosynthesis; CoA from (R)-pantothenate: step 1/5. Functionally, catalyzes the phosphorylation of pantothenate (Pan), the first step in CoA biosynthesis. In Gluconobacter oxydans (strain 621H) (Gluconobacter suboxydans), this protein is Type III pantothenate kinase.